A 347-amino-acid polypeptide reads, in one-letter code: Fatty acid elongase 2 (347 aa).

Topologically, residues 1–62 are lumenal; it reads MNSLVTQYAA…PSEFQFIAGE (62 aa). Residue N32 is glycosylated (N-linked (GlcNAc...) asparagine). A helical transmembrane segment spans residues 63–83; that stretch reads LPLSTLPPVLYAITAYYVIIF. The Cytoplasmic segment spans residues 84-96; it reads GGRFLLSKSKPFK. The helical transmembrane segment at 97 to 119 threads the bilayer; the sequence is LNGLFQLHNLVLTSLSLTLLLLM. Residues 120-122 are Lumenal-facing; the sequence is VEQ. A helical transmembrane segment spans residues 123-142; that stretch reads LVPIIVQHGLYFAICNIGAW. Residues 143-146 lie on the Cytoplasmic side of the membrane; it reads TQPL. The chain crosses the membrane as a helical span at residues 147-169; the sequence is VTLYYMNYIVKFIEFIDTFFLVL. The Lumenal segment spans residues 170 to 200; the sequence is KHKKLTFLHTYHHGATALLCYTQLMGTTSIS. Residues 178–182 carry the HxxHH motif motif; it reads HTYHH. A helical membrane pass occupies residues 201–221; that stretch reads WVPISLNLGVHVVMYWYYFLA. Over 222–231 the chain is Cytoplasmic; that stretch reads ARGIRVWWKE. The chain crosses the membrane as a helical span at residues 232–254; the sequence is WVTRFQIIQFVLDIGFIYFAVYQ. The Lumenal segment spans residues 255-275; the sequence is KAVHLYFPILPHCGDCVGSTT. The chain crosses the membrane as a helical span at residues 276-296; it reads ATFAGCAIISSYLVLFISFYI. Topologically, residues 297–347 are cytoplasmic; it reads NVYKRKGTKTSRVVKRAHGGVAAKVNEYVNVDLKNVPTPSPSPKPQHRRKR. T334 bears the Phosphothreonine mark. A phosphoserine mark is found at S336 and S338. The Di-lysine-like motif signature appears at 344–347; that stretch reads RRKR.

Belongs to the ELO family.

It is found in the endoplasmic reticulum membrane. It carries out the reaction a very-long-chain acyl-CoA + malonyl-CoA + H(+) = a very-long-chain 3-oxoacyl-CoA + CO2 + CoA. The enzyme catalyses octadecanoyl-CoA + malonyl-CoA + H(+) = 3-oxoeicosanoyl-CoA + CO2 + CoA. It catalyses the reaction hexadecanoyl-CoA + malonyl-CoA + H(+) = 3-oxooctadecanoyl-CoA + CO2 + CoA. The catalysed reaction is eicosanoyl-CoA + malonyl-CoA + H(+) = 3-oxodocosanoyl-CoA + CO2 + CoA. It carries out the reaction docosanoyl-CoA + malonyl-CoA + H(+) = 3-oxotetracosanoyl-CoA + CO2 + CoA. Functionally, component of a microsomal membrane-bound long-chain fatty acid elongation system, which produces the 20-26-carbon very long-chain fatty acids (VLCFA) from long-chain fatty acid precursors and is involved ceramide and inositol sphingolipid biosynthesis. Component of elongase II, which elongates 16-18 carbon fatty acyl-CoAs such as palmitoyl-CoA and stearoyl-CoA to 20-22-carbon fatty acids by incorporation of malonyl-CoA. Involved in the synthesis of 1,3-beta-glucan. The enzymes active site faces the cytosol, whereas VLCFA length is determined by a lysine near the luminal end of transmembrane helix 6. Plays an important role in lipotoxic cell death induced by oleic acid through maintaining a balanced fatty acid composition in thr plasma membrane. The sequence is that of Fatty acid elongase 2 from Saccharomyces cerevisiae (strain ATCC 204508 / S288c) (Baker's yeast).